The following is a 361-amino-acid chain: Phospho-N-acetylmuramoyl-pentapeptide-transferase (361 aa).

A run of 10 helical transmembrane segments spans residues 28–48 (LAII…IKFL), 74–94 (TMGG…LADL), 99–119 (IWIT…DDYA), 133–153 (SKLL…EYLD), 168–188 (LSLD…VGSS), 203–223 (VPIA…GNLI), 236–256 (TGEL…FLWF), 263–283 (VFMG…ISVI), 288–308 (IVLA…ILQV), and 338–358 (KVVI…LSSL).

This sequence belongs to the glycosyltransferase 4 family. MraY subfamily. The cofactor is Mg(2+).

The protein resides in the cell membrane. It catalyses the reaction UDP-N-acetyl-alpha-D-muramoyl-L-alanyl-gamma-D-glutamyl-meso-2,6-diaminopimeloyl-D-alanyl-D-alanine + di-trans,octa-cis-undecaprenyl phosphate = di-trans,octa-cis-undecaprenyl diphospho-N-acetyl-alpha-D-muramoyl-L-alanyl-D-glutamyl-meso-2,6-diaminopimeloyl-D-alanyl-D-alanine + UMP. The protein operates within cell wall biogenesis; peptidoglycan biosynthesis. Functionally, catalyzes the initial step of the lipid cycle reactions in the biosynthesis of the cell wall peptidoglycan: transfers peptidoglycan precursor phospho-MurNAc-pentapeptide from UDP-MurNAc-pentapeptide onto the lipid carrier undecaprenyl phosphate, yielding undecaprenyl-pyrophosphoryl-MurNAc-pentapeptide, known as lipid I. This chain is Phospho-N-acetylmuramoyl-pentapeptide-transferase, found in Rickettsia montanensis.